The following is a 411-amino-acid chain: Serine--tRNA ligase (411 aa).

L-serine is bound at residue 226 to 228 (TSE). 257 to 259 (RKE) is an ATP binding site. Glutamate 280 contributes to the L-serine binding site. Residue 344 to 347 (EISS) participates in ATP binding. Residue serine 379 coordinates L-serine.

The protein belongs to the class-II aminoacyl-tRNA synthetase family. Type-1 seryl-tRNA synthetase subfamily. Homodimer. The tRNA molecule binds across the dimer.

The protein resides in the cytoplasm. The catalysed reaction is tRNA(Ser) + L-serine + ATP = L-seryl-tRNA(Ser) + AMP + diphosphate + H(+). It catalyses the reaction tRNA(Sec) + L-serine + ATP = L-seryl-tRNA(Sec) + AMP + diphosphate + H(+). The protein operates within aminoacyl-tRNA biosynthesis; selenocysteinyl-tRNA(Sec) biosynthesis; L-seryl-tRNA(Sec) from L-serine and tRNA(Sec): step 1/1. Its function is as follows. Catalyzes the attachment of serine to tRNA(Ser). Is also able to aminoacylate tRNA(Sec) with serine, to form the misacylated tRNA L-seryl-tRNA(Sec), which will be further converted into selenocysteinyl-tRNA(Sec). This chain is Serine--tRNA ligase, found in Campylobacter jejuni subsp. jejuni serotype O:23/36 (strain 81-176).